The chain runs to 327 residues: DNA-directed RNA polymerase subunit alpha (327 aa).

Positions 1–233 (MVREKVKVST…NLFIPFLHVE (233 aa)) are alpha N-terminal domain (alpha-NTD). Positions 267–327 (LAFQYIFIDQ…KKILDILEKK (61 aa)) are alpha C-terminal domain (alpha-CTD).

This sequence belongs to the RNA polymerase alpha chain family. In terms of assembly, in plastids the minimal PEP RNA polymerase catalytic core is composed of four subunits: alpha, beta, beta', and beta''. When a (nuclear-encoded) sigma factor is associated with the core the holoenzyme is formed, which can initiate transcription.

The protein resides in the plastid. It is found in the chloroplast. It carries out the reaction RNA(n) + a ribonucleoside 5'-triphosphate = RNA(n+1) + diphosphate. Functionally, DNA-dependent RNA polymerase catalyzes the transcription of DNA into RNA using the four ribonucleoside triphosphates as substrates. This chain is DNA-directed RNA polymerase subunit alpha, found in Draba nemorosa (Woodland whitlowgrass).